A 239-amino-acid chain; its full sequence is Venom nerve growth factor (239 aa).

Positions 1–18 (MSMLCYTLIIAFLIGIWA) are cleaved as a signal peptide. Positions 19–125 (APKSEDNVPL…ALNRNIQAKR (107 aa)) are excised as a propeptide. Positions 47-66 (GLKTSRNTDQRHPAPKKADD) are enriched in basic and acidic residues. The tract at residues 47-68 (GLKTSRNTDQRHPAPKKADDQE) is disordered. Cystine bridges form between C139–C203, C181–C231, and C191–C233.

This sequence belongs to the NGF-beta family. Homodimer; non-covalently linked. In terms of tissue distribution, expressed by the venom gland.

It is found in the secreted. Functionally, nerve growth factor is important for the development and maintenance of the sympathetic and sensory nervous systems. It stimulates division and differentiation of sympathetic and embryonic sensory neurons as well as basal forebrain cholinergic neurons in the brain. Its relevance in the snake venom is not clear. However, it has been shown to inhibit metalloproteinase-dependent proteolysis of platelet glycoprotein Ib alpha, suggesting a metalloproteinase inhibition to prevent metalloprotease autodigestion and/or protection against prey proteases. Binds a lipid between the two protein chains in the homodimer. The lipid-bound form promotes histamine relase from mouse mast cells, contrary to the lipid-free form. This is Venom nerve growth factor from Pseudechis porphyriacus (Red-bellied black snake).